A 246-amino-acid chain; its full sequence is Phosphatidylserine decarboxylase proenzyme (246 aa).

Ser204 (schiff-base intermediate with substrate; via pyruvic acid) is an active-site residue. At Ser204 the chain carries Pyruvic acid (Ser); by autocatalysis.

It belongs to the phosphatidylserine decarboxylase family. PSD-A subfamily. In terms of assembly, heterodimer of a large membrane-associated beta subunit and a small pyruvoyl-containing alpha subunit. Requires pyruvate as cofactor. Is synthesized initially as an inactive proenzyme. Formation of the active enzyme involves a self-maturation process in which the active site pyruvoyl group is generated from an internal serine residue via an autocatalytic post-translational modification. Two non-identical subunits are generated from the proenzyme in this reaction, and the pyruvate is formed at the N-terminus of the alpha chain, which is derived from the carboxyl end of the proenzyme. The post-translation cleavage follows an unusual pathway, termed non-hydrolytic serinolysis, in which the side chain hydroxyl group of the serine supplies its oxygen atom to form the C-terminus of the beta chain, while the remainder of the serine residue undergoes an oxidative deamination to produce ammonia and the pyruvoyl prosthetic group on the alpha chain.

It is found in the cell membrane. It carries out the reaction a 1,2-diacyl-sn-glycero-3-phospho-L-serine + H(+) = a 1,2-diacyl-sn-glycero-3-phosphoethanolamine + CO2. It participates in phospholipid metabolism; phosphatidylethanolamine biosynthesis; phosphatidylethanolamine from CDP-diacylglycerol: step 2/2. In terms of biological role, catalyzes the formation of phosphatidylethanolamine (PtdEtn) from phosphatidylserine (PtdSer). The polypeptide is Phosphatidylserine decarboxylase proenzyme (Zymomonas mobilis subsp. mobilis (strain ATCC 31821 / ZM4 / CP4)).